A 257-amino-acid polypeptide reads, in one-letter code: Short chain dehydrogenase prhI (257 aa).

Residues 7–29 form a helical membrane-spanning segment; it reads HVVIITGSSSGIGLAASTLALAS. NADP(+) is bound at residue Ile11. Asn50 is a glycosylation site (N-linked (GlcNAc...) asparagine). Asp57 contacts NADP(+). Asn92 and Asn110 each carry an N-linked (GlcNAc...) asparagine glycan. Residues Arg119, Tyr151, Lys155, and Val184 each coordinate NADP(+). Tyr151 serves as the catalytic Proton acceptor. Catalysis depends on Lys155, which acts as the Lowers pKa of active site Tyr.

It belongs to the short-chain dehydrogenases/reductases (SDR) family.

Its subcellular location is the membrane. The catalysed reaction is protoaustinoid A + A = protoaustinoid B + AH2. It participates in secondary metabolite biosynthesis; terpenoid biosynthesis. In terms of biological role, short chain dehydrogenase; part of the gene cluster that mediates the biosynthesis of paraherquonin, a meroterpenoid with a unique, highly congested hexacyclic molecular architecture. The first step of the pathway is the synthesis of 3,5-dimethylorsellinic acid (DMOA) by the polyketide synthase prhL. Synthesis of DMOA is followed by farnesylation by the prenyltransferase prhE, methylesterification by the methyl-transferase prhM, epoxidation of the prenyl chain by the flavin-dependent monooxygenase prhF, and cyclization of the farnesyl moiety by the terpene cyclase prhH, to yield the tetracyclic intermediate, protoaustinoid A. The short chain dehydrogenase prhI then oxidizes the C-3 alcohol group of the terpene cyclase product to transform protoaustinoid A into protoaustinoid B. The FAD-binding monooxygenase prhJ catalyzes the oxidation of protoaustinoid B into preaustinoid A which is further oxidized into preaustinoid A1 by FAD-binding monooxygenase phrK. Finally, prhA leads to berkeleydione via the berkeleyone B intermediate. PrhA is a multifunctional dioxygenase that first desaturates at C5-C6 to form berkeleyone B, followed by rearrangement of the A/B-ring to form the cycloheptadiene moiety in berkeleydione. Berkeleydione serves as the key intermediate for the biosynthesis of paraherquonin as well as many other meroterpenoids. The cytochrome P450 monooxygenases prhB, prhD, and prhN, as well as the isomerase prhC, are probably involved in the late stage of paraherquonin biosynthesis, after the production of berkeleydione. Especially prhC might be a multifunctional enzyme that catalyzes the D-ring expansion via intramolecular methoxy rearrangement, as well as the hydrolysis of the expanded D-ring. This Penicillium brasilianum protein is Short chain dehydrogenase prhI.